Consider the following 1003-residue polypeptide: Spheroidin (1003 aa).

Residue S2 is modified to N-acetylserine; by host. Residues 953–970 (DANSSSSDSCSDSSSSSE) are compositionally biased toward low complexity. Positions 953-979 (DANSSSSDSCSDSSSSSESESDSDGCC) are disordered.

In terms of assembly, may form disulfide-bond-linked aggregates.

Major component of viral occlusion bodies, the protective complexes in which the virions are embedded in the cytoplasm of their insect hosts. This chain is Spheroidin, found in Amsacta (AmEPV).